Consider the following 61-residue polypeptide: Neurotoxin-like protein 1 (61 aa).

4 cysteine pairs are disulfide-bonded: C3–C24, C17–C38, C42–C53, and C54–C59.

As to expression, expressed by the venom gland.

It is found in the secreted. The protein is Neurotoxin-like protein 1 of Causus rhombeatus (Rhombic night adder).